Here is a 64-residue protein sequence, read N- to C-terminus: Gallinacin-2 (64 aa).

The N-terminal stretch at 1–22 (MRILYLLFSLLFLALQVSPGLS) is a signal peptide. Positions 23–28 (SPRRDM) are excised as a propeptide. Intrachain disulfides connect C31–C57, C36–C51, and C41–C58.

Expressed in circulating heterophil granulocytes and bone marrow (at protein level). Strong expression in the bone marrow, lung and testis. Moderate expression in the bursa and intestine. Low expression in the cloaca, gall bladder, brain, pancreas, trachea, air sacs and spleen. Expressed in the vagina, ovarian stroma and the theca layer of the ovarian follicle, but not in the granulosa layer of the ovarian follicle.

The protein resides in the secreted. The protein localises to the cytoplasmic granule. Its function is as follows. Potent antibacterial activity against the Gram-negative bacterium E.coli ML-35, and against the Gram-positive bacterium L.monocytogenes EGD. Lacks antifungal activity against C.albicans. This chain is Gallinacin-2 (GAL2), found in Gallus gallus (Chicken).